Reading from the N-terminus, the 82-residue chain is Chaperone protein DnaJ 1 (82 aa).

The tract at residues 1 to 33 (YHLGGPPVTLKLPPGTPAGRTMRARGKGAVRKD) is disordered.

This sequence belongs to the DnaJ family. Homodimer. Zn(2+) is required as a cofactor.

Its subcellular location is the cytoplasm. In terms of biological role, participates actively in the response to hyperosmotic and heat shock by preventing the aggregation of stress-denatured proteins and by disaggregating proteins, also in an autonomous, DnaK-independent fashion. Unfolded proteins bind initially to DnaJ; upon interaction with the DnaJ-bound protein, DnaK hydrolyzes its bound ATP, resulting in the formation of a stable complex. GrpE releases ADP from DnaK; ATP binding to DnaK triggers the release of the substrate protein, thus completing the reaction cycle. Several rounds of ATP-dependent interactions between DnaJ, DnaK and GrpE are required for fully efficient folding. Also involved, together with DnaK and GrpE, in the DNA replication of plasmids through activation of initiation proteins. The sequence is that of Chaperone protein DnaJ 1 (dnaJ1) from Streptomyces albus G.